A 183-amino-acid polypeptide reads, in one-letter code: Casparian strip membrane protein 2 (183 aa).

Residues 1–23 are Cytoplasmic-facing; that stretch reads MDSGEQGETSKAPLNKGVSRGVS. A helical transmembrane segment spans residues 24–44; the sequence is ILDLILRVIAVISTLASAIAM. The Extracellular portion of the chain corresponds to 45–71; sequence GTTNETLPLFTPFIQFKARYSDLPALT. The N-linked (GlcNAc...) asparagine glycan is linked to asparagine 48. Residues 72–92 form a helical membrane-spanning segment; the sequence is FFVVANSIVSAYLILSLPLSI. The Cytoplasmic segment spans residues 93–104; that stretch reads AHIIRSGAKYSR. The helical transmembrane segment at 105–125 threads the bilayer; it reads LVLIIFDAAMLALVTAASSAA. The Extracellular segment spans residues 126–158; that stretch reads TAIVYLAHKGNVRANWLAICQQLDSFCERTSGS. The helical transmembrane segment at 159–179 threads the bilayer; the sequence is LVGSFGAMVLLILLILLSAMA. Residues 180-183 are Cytoplasmic-facing; it reads LARR.

Belongs to the Casparian strip membrane proteins (CASP) family. In terms of assembly, homodimer and heterodimers.

It is found in the cell membrane. Its function is as follows. Regulates membrane-cell wall junctions and localized cell wall deposition. Required for establishment of the Casparian strip membrane domain (CSD) and the subsequent formation of Casparian strips, a cell wall modification of the root endodermis that determines an apoplastic barrier between the intraorganismal apoplasm and the extraorganismal apoplasm and prevents lateral diffusion. The protein is Casparian strip membrane protein 2 of Triticum aestivum (Wheat).